A 442-amino-acid chain; its full sequence is tRNA-2-methylthio-N(6)-dimethylallyladenosine synthase (442 aa).

The MTTase N-terminal domain maps to 3 to 118 (KKVFIKTFGC…LPELLNARAA (116 aa)). The [4Fe-4S] cluster site is built by Cys12, Cys49, Cys81, Cys155, Cys159, and Cys162. Residues 141–374 (RVEGSSAFVS…QAVINNNIKD (234 aa)) enclose the Radical SAM core domain. The 64-residue stretch at 377-440 (DERVGTVQRL…TFTLRGEVVV (64 aa)) folds into the TRAM domain.

It belongs to the methylthiotransferase family. MiaB subfamily. In terms of assembly, monomer. It depends on [4Fe-4S] cluster as a cofactor.

The protein resides in the cytoplasm. It catalyses the reaction N(6)-dimethylallyladenosine(37) in tRNA + (sulfur carrier)-SH + AH2 + 2 S-adenosyl-L-methionine = 2-methylsulfanyl-N(6)-dimethylallyladenosine(37) in tRNA + (sulfur carrier)-H + 5'-deoxyadenosine + L-methionine + A + S-adenosyl-L-homocysteine + 2 H(+). Functionally, catalyzes the methylthiolation of N6-(dimethylallyl)adenosine (i(6)A), leading to the formation of 2-methylthio-N6-(dimethylallyl)adenosine (ms(2)i(6)A) at position 37 in tRNAs that read codons beginning with uridine. The polypeptide is tRNA-2-methylthio-N(6)-dimethylallyladenosine synthase (Delftia acidovorans (strain DSM 14801 / SPH-1)).